The chain runs to 294 residues: ATP phosphoribosyltransferase (294 aa).

Belongs to the ATP phosphoribosyltransferase family. Long subfamily. Requires Mg(2+) as cofactor.

It localises to the cytoplasm. It catalyses the reaction 1-(5-phospho-beta-D-ribosyl)-ATP + diphosphate = 5-phospho-alpha-D-ribose 1-diphosphate + ATP. The protein operates within amino-acid biosynthesis; L-histidine biosynthesis; L-histidine from 5-phospho-alpha-D-ribose 1-diphosphate: step 1/9. With respect to regulation, feedback inhibited by histidine. Functionally, catalyzes the condensation of ATP and 5-phosphoribose 1-diphosphate to form N'-(5'-phosphoribosyl)-ATP (PR-ATP). Has a crucial role in the pathway because the rate of histidine biosynthesis seems to be controlled primarily by regulation of HisG enzymatic activity. The polypeptide is ATP phosphoribosyltransferase (Pelodictyon phaeoclathratiforme (strain DSM 5477 / BU-1)).